The chain runs to 747 residues: UPF0313 protein PA4928 (747 aa).

The Radical SAM core domain occupies 371–640; sequence AYEMIRFSVN…KSDQQRRLHK (270 aa). [4Fe-4S] cluster is bound by residues Cys-385, Cys-389, and Cys-392. The interval 670 to 747 is disordered; it reads GKHHLVPTYQ…KKSRQPNIPR (78 aa).

It belongs to the UPF0313 family. The cofactor is [4Fe-4S] cluster.

The sequence is that of UPF0313 protein PA4928 from Pseudomonas aeruginosa (strain ATCC 15692 / DSM 22644 / CIP 104116 / JCM 14847 / LMG 12228 / 1C / PRS 101 / PAO1).